A 220-amino-acid chain; its full sequence is Ribose-5-phosphate isomerase A (220 aa).

Substrate-binding positions include threonine 28–threonine 31, aspartate 81–aspartate 84, and lysine 94–glycine 97. Residue glutamate 103 is the Proton acceptor of the active site. Lysine 121 is a binding site for substrate.

It belongs to the ribose 5-phosphate isomerase family. In terms of assembly, homodimer.

The enzyme catalyses aldehydo-D-ribose 5-phosphate = D-ribulose 5-phosphate. Its pathway is carbohydrate degradation; pentose phosphate pathway; D-ribose 5-phosphate from D-ribulose 5-phosphate (non-oxidative stage): step 1/1. Functionally, catalyzes the reversible conversion of ribose-5-phosphate to ribulose 5-phosphate. The sequence is that of Ribose-5-phosphate isomerase A from Coxiella burnetii (strain CbuK_Q154) (Coxiella burnetii (strain Q154)).